A 738-amino-acid chain; its full sequence is MDPFFLNTQHVELLVSGKQSSPQDLLGIVSESLNQDRIVLFRPGAETVFVELRGKIQQAESHHSGIFSLPVMKGISPQDYRVYHQNGLLAHDPYAFPLLWGEIDSFLFHEGTHQRIYERMGAIPCEIDGVPGVRFIVWAPHAQRVSVIGDFNGWHGLVNPLHKVSDQGVWELFVPGLTAGACYKWEMVTESGQVLIKSDPYGKFFGPPPRSVSVVIDDSYEWNDSEWLEERIKKTEGPMNIYEVHVGSWQWQEGQPLNYKELADQLALYCKQMHYTHVELLPVTEHPLNESWGYQTTGYYAPTSRYGSFEDLQYFIDTMHQHGIGVILDWVPGHFPIDSFAMSGFDGTPLYEYTRNPSPLHPHWHTYTFDYAKPEVCNFLLGSALFWIDKMHVDGIRVDAVSSMLYLDYGRYAGEWVPNRYGGRENLDAIRFLQQFNTVIHEKYPGVLTFAEESTTFPKITVSVEEGGLGFDYKWNMGWMHDTLHYFEKDFPYRPYHQSDLTFPQWYAFSERFLLPFSHDEVVHGKRSLIGKMPGDAWRQFAQLRLLLGYQICQPGKKLLFMGGEFGQGREWSPGRELDWELLDISYHQGVHLCSQELNALYVQSPQLWQADHLPSSFRWVDFSDVRNGVVAYLRFADADAKKALLCVHHFGVGYFPHYLLPILPLESCDLLMNTDNTRFGGSGKGFREPEILTPEIARQEREAAGLIEADDESGPDCWGLDIELPPSATLIFSVTLQ.

Residue aspartate 399 is the Nucleophile of the active site. Residue glutamate 452 is the Proton donor of the active site.

It belongs to the glycosyl hydrolase 13 family. GlgB subfamily. In terms of assembly, monomer.

The enzyme catalyses Transfers a segment of a (1-&gt;4)-alpha-D-glucan chain to a primary hydroxy group in a similar glucan chain.. It participates in glycan biosynthesis; glycogen biosynthesis. Its function is as follows. Catalyzes the formation of the alpha-1,6-glucosidic linkages in glycogen by scission of a 1,4-alpha-linked oligosaccharide from growing alpha-1,4-glucan chains and the subsequent attachment of the oligosaccharide to the alpha-1,6 position. This chain is 1,4-alpha-glucan branching enzyme GlgB, found in Chlamydia trachomatis serovar L2 (strain ATCC VR-902B / DSM 19102 / 434/Bu).